A 393-amino-acid chain; its full sequence is UDP-sulfoquinovose synthase (393 aa).

NAD(+) contacts are provided by residues 31–35 (DNLST), 74–75 (DI), arginine 100, and asparagine 118. Arginine 100 contributes to the substrate binding site. Substrate-binding residues include threonine 144 and tyrosine 182. Threonine 144 is an active-site residue. Positions 182 and 186 each coordinate NAD(+). Residue tyrosine 182 is the Proton acceptor of the active site. Residue lysine 186 is part of the active site. Position 209 (glutamine 209) interacts with substrate. Valine 212 is an NAD(+) binding site. Substrate is bound by residues 238–241 (VVNR), 253–255 (TVY), and 326–328 (RVE).

This sequence belongs to the NAD(P)-dependent epimerase/dehydratase family. It depends on NAD(+) as a cofactor.

The enzyme catalyses sulfite + UDP-alpha-D-glucose + H(+) = UDP-alpha-D-6-sulfoquinovose + H2O. Its function is as follows. Catalyzes the biosynthesis of UDP-sulfoquinovose by the transfer of sulfite to UDP-glucose. Important for the assembly of the S-layer N-glycans. The reaction probably occurs through an NAD(+)-dependent oxidation/dehydration/enolization/sulfite addition process. In vitro, in the absence of sulfite, UDP-D-glucose is converted via UDP-4-keto-D-glucose to UDP-D-glucose-5,6-ene. This is UDP-sulfoquinovose synthase from Sulfolobus acidocaldarius (strain ATCC 33909 / DSM 639 / JCM 8929 / NBRC 15157 / NCIMB 11770).